Consider the following 671-residue polypeptide: Phenol 2-monooxygenase (671 aa).

Residues D10 to D43 and L295 to D305 each bind FAD.

This sequence belongs to the PheA/TfdB FAD monooxygenase family. The cofactor is FAD.

Its subcellular location is the cytoplasm. It carries out the reaction phenol + NADPH + O2 + H(+) = catechol + NADP(+) + H2O. It functions in the pathway aromatic compound metabolism; phenol degradation. In terms of biological role, hydroxylates phenol to catechol. Also acts on cresols. This is Phenol 2-monooxygenase (tbuD) from Ralstonia pickettii (Burkholderia pickettii).